The chain runs to 742 residues: MEEGFRDRAAFIRGAKDIAKEVKKHATKKVVKGLDRVQDEYSRRSYSRFEEEDDDDDFPAPADGYYRGEGAQDEEEGGASSDATEGHDEDDEIYEGEYQGIPRAESGGKGERMADGAPLAGVRGGLGDGEGPPGGRGEAQRRKEREELAQQYEAILRECGHGRFQWTLYFVLGLALMADGVEVFVVGFVLPSAEKDMCLSDSNKGMLGLIVYLGMMVGAFLWGGLADRLGRRQCLLISLSVNSVFAFFSSFVQGYGTFLFCRLLSGVGIGGSIPIVFSYFSEFLAQEKRGEHLSWLCMFWMIGGVYAAAMAWAIIPHYGWSFQMGSAYQFHSWRVFVLVCAFPSVFAIGALTTQPESPRFFLENGKHDEAWMVLKQVHDTNMRAKGHPERVFSVTHIKTIHQEDELIEIQSDTGAWYQRWGVRALSLGGQVWGNFLSCFGPEYRRITLMMMGVWFTMSFSYYGLTVWFPDMIRHLQAVDYAARTKVFPGERVEHVTFNFTLENQIHRGGQYFNDKFIGLRLKSVSFEDSLFEECYFEDVTSSNTFFRNCTFINTVFYNTDLFEYKFVNSRLVNSTFLHNKEGCPLDVTGTGEGAYMVYFVSFLGTLAVLPGNIVSALLMDKIGRLRMLAGSSVMSCVSCFFLSFGNSESAMIALLCLFGGVSIASWNALDVLTVELYPSDKRTTAFGFLNALCKLAAVLGISIFTSFVGITKAAPILFASAALALGSSLALKLPETRGQVLQ.

An interaction with SYT1 region spans residues 1–57; sequence MEEGFRDRAAFIRGAKDIAKEVKKHATKKVVKGLDRVQDEYSRRSYSRFEEEDDDDD. The Cytoplasmic segment spans residues 1–169; it reads MEEGFRDRAA…GHGRFQWTLY (169 aa). Residues 32–49 are compositionally biased toward basic and acidic residues; that stretch reads KGLDRVQDEYSRRSYSRF. The disordered stretch occupies residues 32–144; it reads KGLDRVQDEY…GRGEAQRRKE (113 aa). 2 positions are modified to phosphoserine: Ser80 and Ser81. Thr84 is modified (phosphothreonine). Residues 122–137 are compositionally biased toward gly residues; that stretch reads VRGGLGDGEGPPGGRG. Residues 170-190 form a helical membrane-spanning segment; it reads FVLGLALMADGVEVFVVGFVL. Residues 191–205 lie on the Extracellular side of the membrane; it reads PSAEKDMCLSDSNKG. A helical membrane pass occupies residues 206 to 226; it reads MLGLIVYLGMMVGAFLWGGLA. The Cytoplasmic segment spans residues 227–233; sequence DRLGRRQ. A helical membrane pass occupies residues 234-254; the sequence is CLLISLSVNSVFAFFSSFVQG. The Extracellular segment spans residues 255 to 262; sequence YGTFLFCR. A helical membrane pass occupies residues 263–283; the sequence is LLSGVGIGGSIPIVFSYFSEF. Topologically, residues 284-294 are cytoplasmic; sequence LAQEKRGEHLS. The helical transmembrane segment at 295–315 threads the bilayer; it reads WLCMFWMIGGVYAAAMAWAII. The Extracellular portion of the chain corresponds to 316–334; sequence PHYGWSFQMGSAYQFHSWR. A helical transmembrane segment spans residues 335 to 355; sequence VFVLVCAFPSVFAIGALTTQP. Topologically, residues 356–447 are cytoplasmic; it reads ESPRFFLENG…CFGPEYRRIT (92 aa). The residue at position 393 (Ser393) is a Phosphoserine. Residues 448–468 traverse the membrane as a helical segment; that stretch reads LMMMGVWFTMSFSYYGLTVWF. Residues 469–598 are Extracellular-facing; the sequence is PDMIRHLQAV…GTGEGAYMVY (130 aa). Tyr480 carries the post-translational modification Phosphotyrosine. Asn498, Asn548, and Asn573 each carry an N-linked (GlcNAc...) asparagine glycan. Residues 599–619 traverse the membrane as a helical segment; it reads FVSFLGTLAVLPGNIVSALLM. Residues 620-626 lie on the Cytoplasmic side of the membrane; sequence DKIGRLR. The helical transmembrane segment at 627-647 threads the bilayer; that stretch reads MLAGSSVMSCVSCFFLSFGNS. Topologically, residues 648–651 are extracellular; that stretch reads ESAM. The helical transmembrane segment at 652 to 672 threads the bilayer; it reads IALLCLFGGVSIASWNALDVL. Topologically, residues 673 to 685 are cytoplasmic; it reads TVELYPSDKRTTA. The helical transmembrane segment at 686–708 threads the bilayer; that stretch reads FGFLNALCKLAAVLGISIFTSFV. The Extracellular portion of the chain corresponds to 709–712; that stretch reads GITK. Residues 713–731 form a helical membrane-spanning segment; the sequence is AAPILFASAALALGSSLAL. The Cytoplasmic portion of the chain corresponds to 732–742; that stretch reads KLPETRGQVLQ.

This sequence belongs to the major facilitator superfamily. Interacts with SYT1/synaptotagmin-1 in a calcium-dependent manner. Binds the adapter protein complex AP-2. In terms of processing, phosphorylation by CK1 of the N-terminal cytoplasmic domain regulates interaction with SYT1. Post-translationally, N-glycosylated.

The protein resides in the presynapse. It localises to the cytoplasmic vesicle. The protein localises to the secretory vesicle. Its subcellular location is the synaptic vesicle membrane. Functionally, plays a role in the control of regulated secretion in neural and endocrine cells, enhancing selectively low-frequency neurotransmission. Positively regulates vesicle fusion by maintaining the readily releasable pool of secretory vesicles. The sequence is that of Synaptic vesicle glycoprotein 2A (SV2A) from Bos taurus (Bovine).